The sequence spans 126 residues: Basic phospholipase A2 1 (126 aa).

Residues 1–7 constitute a propeptide that is removed on maturation; sequence SNRPMPL. 7 cysteine pairs are disulfide-bonded: Cys-18/Cys-78, Cys-33/Cys-125, Cys-35/Cys-51, Cys-50/Cys-106, Cys-57/Cys-99, Cys-67/Cys-92, and Cys-85/Cys-97. 3 residues coordinate Ca(2+): Tyr-34, Gly-36, and Gly-38. Residue His-54 is part of the active site. Residue Asp-55 coordinates Ca(2+). The active site involves Asp-100.

This sequence belongs to the phospholipase A2 family. Group I subfamily. D49 sub-subfamily. In terms of assembly, heterodimer formed between two homologous isoforms: isoform 1 and isoform 2. Ca(2+) is required as a cofactor. In terms of tissue distribution, expressed by the venom gland.

It localises to the secreted. The catalysed reaction is a 1,2-diacyl-sn-glycero-3-phosphocholine + H2O = a 1-acyl-sn-glycero-3-phosphocholine + a fatty acid + H(+). Its function is as follows. PLA2 catalyzes the calcium-dependent hydrolysis of the 2-acyl groups in 3-sn-phosphoglycerides. This is Basic phospholipase A2 1 from Naja sagittifera (Andaman cobra).